The following is a 728-amino-acid chain: Catalase-peroxidase (728 aa).

The tryptophyl-tyrosyl-methioninium (Trp-Tyr) (with M-244) cross-link spans 91–218; sequence WHSAGTYRTA…LAAVQMGLIY (128 aa). His92 (proton acceptor) is an active-site residue. Positions 218–244 form a cross-link, tryptophyl-tyrosyl-methioninium (Tyr-Met) (with W-91); sequence YVNPEGPDGTPDPVAAAHDIRETFARM. His259 is a binding site for heme b.

This sequence belongs to the peroxidase family. Peroxidase/catalase subfamily. Homodimer or homotetramer. Heme b serves as cofactor. Post-translationally, formation of the three residue Trp-Tyr-Met cross-link is important for the catalase, but not the peroxidase activity of the enzyme.

It catalyses the reaction H2O2 + AH2 = A + 2 H2O. The catalysed reaction is 2 H2O2 = O2 + 2 H2O. Its function is as follows. Bifunctional enzyme with both catalase and broad-spectrum peroxidase activity. The polypeptide is Catalase-peroxidase (Burkholderia lata (strain ATCC 17760 / DSM 23089 / LMG 22485 / NCIMB 9086 / R18194 / 383)).